Here is a 456-residue protein sequence, read N- to C-terminus: tRNA-2-methylthio-N(6)-dimethylallyladenosine synthase (456 aa).

The MTTase N-terminal domain occupies 18 to 134 (KKLFIETYGC…LPDLVASVEA (117 aa)). C27, C63, C98, C172, C176, and C179 together coordinate [4Fe-4S] cluster. The 233-residue stretch at 158–390 (CGNHISGFVS…IELQNRLSAE (233 aa)) folds into the Radical SAM core domain. In terms of domain architecture, TRAM spans 393–456 (ARDVGKTFEV…SATLKGEEVF (64 aa)).

Belongs to the methylthiotransferase family. MiaB subfamily. In terms of assembly, monomer. Requires [4Fe-4S] cluster as cofactor.

The protein localises to the cytoplasm. It carries out the reaction N(6)-dimethylallyladenosine(37) in tRNA + (sulfur carrier)-SH + AH2 + 2 S-adenosyl-L-methionine = 2-methylsulfanyl-N(6)-dimethylallyladenosine(37) in tRNA + (sulfur carrier)-H + 5'-deoxyadenosine + L-methionine + A + S-adenosyl-L-homocysteine + 2 H(+). Catalyzes the methylthiolation of N6-(dimethylallyl)adenosine (i(6)A), leading to the formation of 2-methylthio-N6-(dimethylallyl)adenosine (ms(2)i(6)A) at position 37 in tRNAs that read codons beginning with uridine. This Phocaeicola vulgatus (strain ATCC 8482 / DSM 1447 / JCM 5826 / CCUG 4940 / NBRC 14291 / NCTC 11154) (Bacteroides vulgatus) protein is tRNA-2-methylthio-N(6)-dimethylallyladenosine synthase.